We begin with the raw amino-acid sequence, 2173 residues long: Mediator of RNA polymerase II transcription subunit 12 (2173 aa).

Disordered regions lie at residues 1–34 (MAAF…QKED), 318–345 (GGHQ…AGGN), 630–718 (ASNS…KGMD), 784–804 (KSTA…KPEA), 1380–1404 (MNSS…NSAS), 1443–1467 (ELEK…KSMS), 1737–1780 (EEEP…VKQE), and 2020–2068 (QGIH…FRPQ). Over residues 702–717 (QAQEQESKSTAKDKGM) the composition is skewed to basic and acidic residues. A compositionally biased stretch (low complexity) spans 1389–1404 (GSAVSGSSVSNSNSAS). 2 stretches are compositionally biased toward basic and acidic residues: residues 1443-1462 (ELEK…DRQK) and 1747-1759 (EPDK…KVEK). Residues 2034 to 2057 (QQQQQQQQQQQQQQQQQQVHQQQQ) show a composition bias toward low complexity.

Belongs to the Mediator complex subunit 12 family. Component of the Mediator complex.

The protein resides in the nucleus. Component of the Mediator complex, a coactivator involved in regulated gene transcription of nearly all RNA polymerase II-dependent genes. Mediator functions as a bridge to convey information from gene-specific regulatory proteins to the basal RNA polymerase II transcription machinery. Mediator is recruited to promoters by direct interactions with regulatory proteins and serves as a scaffold for the assembly of a functional preinitiation complex with RNA polymerase II and the general transcription factors. Required for development of the body axis, brain, ear, kidney, forelimb and neural crest and for pigmentation. Acts as a coactivator for sox9a and/or sox9b promoting the expression of several neuronal determination genes. This Danio rerio (Zebrafish) protein is Mediator of RNA polymerase II transcription subunit 12 (med12).